Here is a 172-residue protein sequence, read N- to C-terminus: R-phycocyanin-1 beta chain (172 aa).

N4-methylasparagine is present on N72. C82 lines the (2R,3E)-phycocyanobilin pocket. A (2R,3E)-phycoerythrobilin-binding site is contributed by C153.

The protein belongs to the phycobiliprotein family. Heterodimer of an alpha and a beta chain. Dimers further assemble into trimers and the trimers into hexamers. The basic functional unit of phycobiliproteins is a ring-shaped hexamer formed from two back-to-back trimers contacting via the alpha chain subunits. The trimers are composed of alpha/beta subunit heterodimers arranged around a three-fold axis of symmetry. The phycoerythrins also contain a gamma subunit which is located in the center of the hexamer. Contains two covalently linked bilin chromophores.

Its subcellular location is the plastid. It is found in the chloroplast thylakoid membrane. Its function is as follows. Light-harvesting photosynthetic bile pigment-protein from the phycobiliprotein complex (phycobilisome, PBS). Phycocyanin is the major phycobiliprotein in the PBS rod. This Porphyridium purpureum (Red alga) protein is R-phycocyanin-1 beta chain (rpcB).